Here is a 196-residue protein sequence, read N- to C-terminus: Mediator of RNA polymerase II transcription subunit 21 (196 aa).

Residues 52–111 (KIPKNASTPPVPASAPQAAQSQSQASPPPPDTANPQTGGQHADQQQQSPDGEGLPAPDSP) form a disordered region. Low complexity-rich tracts occupy residues 65 to 76 (SAPQAAQSQSQA) and 87 to 98 (QTGGQHADQQQQ). Residues 144 to 174 (SSEAEQERRIRELEGELRIVEGVREERRREL) adopt a coiled-coil conformation.

The protein belongs to the Mediator complex subunit 21 family. As to quaternary structure, component of the Mediator complex.

The protein localises to the nucleus. Component of the Mediator complex, a coactivator involved in the regulated transcription of nearly all RNA polymerase II-dependent genes. Mediator functions as a bridge to convey information from gene-specific regulatory proteins to the basal RNA polymerase II transcription machinery. Mediator is recruited to promoters by direct interactions with regulatory proteins and serves as a scaffold for the assembly of a functional preinitiation complex with RNA polymerase II and the general transcription factors. The chain is Mediator of RNA polymerase II transcription subunit 21 (srb7) from Aspergillus niger (strain ATCC MYA-4892 / CBS 513.88 / FGSC A1513).